The sequence spans 370 residues: tRNA pseudouridine synthase D (370 aa).

D77 (nucleophile) is an active-site residue. The TRUD domain occupies 152-297 (GVPNYFGEQR…LEQERRPLLL (146 aa)).

Belongs to the pseudouridine synthase TruD family.

It catalyses the reaction uridine(13) in tRNA = pseudouridine(13) in tRNA. In terms of biological role, responsible for synthesis of pseudouridine from uracil-13 in transfer RNAs. The chain is tRNA pseudouridine synthase D from Shewanella oneidensis (strain ATCC 700550 / JCM 31522 / CIP 106686 / LMG 19005 / NCIMB 14063 / MR-1).